Reading from the N-terminus, the 60-residue chain is Cytotoxin 5 (60 aa).

4 cysteine pairs are disulfide-bonded: cysteine 3–cysteine 21, cysteine 14–cysteine 38, cysteine 42–cysteine 53, and cysteine 54–cysteine 59.

Belongs to the three-finger toxin family. Short-chain subfamily. Type IA cytotoxin sub-subfamily. In terms of assembly, monomer in solution; Homodimer and oligomer in the presence of negatively charged lipids forming a pore with a size ranging between 20 and 30 Angstroms. As to expression, expressed by the venom gland.

The protein resides in the secreted. It is found in the target cell membrane. Functionally, shows cytolytic activity on many different cells by forming pore in lipid membranes. In vivo, increases heart rate or kills the animal by cardiac arrest. In addition, it binds to heparin with high affinity, interacts with Kv channel-interacting protein 1 (KCNIP1) in a calcium-independent manner, and binds to integrin alpha-V/beta-3 (ITGAV/ITGB3) with moderate affinity. This chain is Cytotoxin 5, found in Naja kaouthia (Monocled cobra).